The primary structure comprises 109 residues: uncharacterized protein (109 aa).

The chain crosses the membrane as a helical span at residues 75 to 95; the sequence is LHFFFLFWLLNFILFFRIHLY.

It is found in the membrane. This is an uncharacterized protein from Schizosaccharomyces pombe (strain 972 / ATCC 24843) (Fission yeast).